The sequence spans 165 residues: Dihydrofolate reductase (165 aa).

Residues 3-165 enclose the DHFR domain; the sequence is VVGLIWAQST…RYRLHSYHRS (163 aa). 7-9 is a binding site for substrate; sequence IWA. Residues 8–9 and 16–21 contribute to the NADP(+) site; these read WA and IGRDGG. Position 29 (aspartate 29) interacts with substrate. Residue 45-48 participates in NADP(+) binding; sequence GRRT. Arginine 62 is a binding site for substrate. Residues 67–70 and 100–105 each bind NADP(+); these read LSRQ and IGGEQI. Position 119 (threonine 119) interacts with substrate.

This sequence belongs to the dihydrofolate reductase family.

The enzyme catalyses (6S)-5,6,7,8-tetrahydrofolate + NADP(+) = 7,8-dihydrofolate + NADPH + H(+). The protein operates within cofactor biosynthesis; tetrahydrofolate biosynthesis; 5,6,7,8-tetrahydrofolate from 7,8-dihydrofolate: step 1/1. In terms of biological role, key enzyme in folate metabolism. Catalyzes an essential reaction for de novo glycine and purine synthesis, and for DNA precursor synthesis. This is Dihydrofolate reductase (folA) from Mycobacterium leprae (strain TN).